A 56-amino-acid chain; its full sequence is Large ribosomal subunit protein bL32A (56 aa).

The tract at residues 1–56 (MAVPARRTSKAKKNKRRTHKGLTAPGLSRDSETGEYRMSHRISPDGTYKGRTIIEK) is disordered. Basic residues predominate over residues 7-20 (RTSKAKKNKRRTHK). Basic and acidic residues predominate over residues 29–38 (RDSETGEYRM).

It belongs to the bacterial ribosomal protein bL32 family.

The chain is Large ribosomal subunit protein bL32A (rpmF1) from Listeria innocua serovar 6a (strain ATCC BAA-680 / CLIP 11262).